A 605-amino-acid polypeptide reads, in one-letter code: Replication and transcription activator (605 aa).

Disordered stretches follow at residues 307-381 (SLPS…EPEQ) and 447-509 (RIRP…EDPD). The segment covering 321–338 (SADCGDSSSSSSDSGNSD) has biased composition (low complexity). Basic and acidic residues predominate over residues 341–353 (QSEREEARAEAPR). Over residues 355–364 (RAPKSRRTSR) the composition is skewed to basic residues.

It belongs to the herpesviridae Rta family. As to quaternary structure, interacts with human ATF7IP protein, leading to promote and regulate host genes in virus-infected cells. Interacts with RNA polymerase III complex; this interaction downregulates small RNA transcription and 5'-pppRNA production.

Its subcellular location is the host nucleus. The protein localises to the virion tegument. Functionally, immediate-early transcription factor that controls the initiation of viral lytic gene expression and lytic reactivation from latency. Triggers lytic replication, and initiates a cellular senescence program in epithelial cells. Up-regulates human DCR3/TNFRSF6B by directly binding to its receptor. Globally induces a proteasome-dependent loss of SUMOylated proteins in the host cell and the loss of promeylocytic leukemia nuclear bodies. Improves the stability of the triplex capsid protein TRX1 by reducing the ubiquitination level of the latter. Mediates evasion of inflammasome activation and antiviral responses (T- and NK cell activation) during EBV early lytic infection. The protein is Replication and transcription activator of Epstein-Barr virus (strain AG876) (HHV-4).